A 96-amino-acid polypeptide reads, in one-letter code: Conglutin delta 4 (96 aa).

The N-terminal stretch at 1-22 is a signal peptide; sequence MARLTILIAFVAALVLVVHTSA. 2 cysteine pairs are disulfide-bonded: cysteine 29–cysteine 78 and cysteine 80–cysteine 91.

Belongs to the 2S seed storage albumins family.

Its subcellular location is the endoplasmic reticulum. The sequence is that of Conglutin delta 4 from Lupinus angustifolius (Narrow-leaved blue lupine).